The primary structure comprises 182 residues: Probable RNA 2'-phosphotransferase (182 aa).

It belongs to the KptA/TPT1 family.

Functionally, removes the 2'-phosphate from RNA via an intermediate in which the phosphate is ADP-ribosylated by NAD followed by a presumed transesterification to release the RNA and generate ADP-ribose 1''-2''-cyclic phosphate (APPR&gt;P). May function as an ADP-ribosylase. This is Probable RNA 2'-phosphotransferase from Herpetosiphon aurantiacus (strain ATCC 23779 / DSM 785 / 114-95).